The sequence spans 300 residues: Zinc finger protein RME1 (300 aa).

A compositionally biased stretch (polar residues) spans 80 to 90 (QAYDSTSSTEE). Residues 80 to 100 (QAYDSTSSTEEGTAPQLRPDE) are disordered. C2H2-type zinc fingers lie at residues 178–199 (YHCS…HLDE), 206–234 (CKCP…ASQH), and 256–281 (LNCP…AMVH).

The protein localises to the nucleus. In terms of biological role, involved in the control of meiosis. Represses the transcription of the IME1 gene thereby inhibiting cells from entering meiosis. But also activates the CLN2 gene thus promoting mitosis. In Saccharomyces cerevisiae (strain ATCC 204508 / S288c) (Baker's yeast), this protein is Zinc finger protein RME1 (RME1).